The chain runs to 181 residues: Thioredoxin-like protein CITRX1, chloroplastic (181 aa).

Residues 1-20 (MQAATLSFHPSAPPPQTSAC) form a disordered region. A chloroplast-targeting transit peptide spans 1-70 (MQAATLSFHP…PAVATGKYVR (70 aa)). The Thioredoxin domain maps to 71–181 (EDYLVKKVSA…MMRDIINNDL (111 aa)). Residues Cys104 and Cys107 each act as nucleophile in the active site. A disulfide bridge connects residues Cys104 and Cys107.

This sequence belongs to the thioredoxin family. Plant CITRX-type subfamily.

The protein resides in the plastid. The protein localises to the chloroplast. Probable thiol-disulfide oxidoreductase that may play a role in proper chloroplast development. This is Thioredoxin-like protein CITRX1, chloroplastic from Nicotiana benthamiana.